Reading from the N-terminus, the 389-residue chain is Transcription factor MYB97 (389 aa).

HTH myb-type domains lie at 16–68 (GVVL…ANHL) and 69–123 (RPNL…KRFQ). 2 consecutive DNA-binding regions (H-T-H motif) follow at residues 44–68 (WNSV…ANHL) and 96–119 (WARM…NTRL). The interval 131–159 (PPEYSQNNHQQQMYPQQPSSPLPSQTPAS) is disordered. Low complexity predominate over residues 140–159 (QQQMYPQQPSSPLPSQTPAS).

As to expression, accumulates in pollen grains and pollen tube. Mostly expressed in mature pollen grains, and, to a lower extent, in inflorescences and siliques.

Its subcellular location is the nucleus. Functionally, transcription activator. Binds to 5'-CAACTGTC-3' and/or 5'-TAACAAA-3' motif in target gene promoter to promote their expression. Together with MYB101 and MYB120, functions as a male factor that controls pollen tube-synergid interaction in fertilization. Required for pollen tube growth arrest and sperm cell release in the female gametophyte, probably via the regulation of pollen tube-specific gene expression. In Arabidopsis thaliana (Mouse-ear cress), this protein is Transcription factor MYB97.